We begin with the raw amino-acid sequence, 65 residues long: Cecropin (65 aa).

The N-terminal stretch at 1 to 23 (MNFVKVLFFISACILIMLSAVSG) is a signal peptide.

This sequence belongs to the cecropin family.

It localises to the secreted. Its function is as follows. Has antibacterial activity. The protein is Cecropin (LOC113514368) of Galleria mellonella (Greater wax moth).